The following is a 453-amino-acid chain: Probable glycine dehydrogenase (decarboxylating) subunit 1 (453 aa).

It belongs to the GcvP family. N-terminal subunit subfamily. The glycine cleavage system is composed of four proteins: P, T, L and H. In this organism, the P 'protein' is a heterodimer of two subunits.

It catalyses the reaction N(6)-[(R)-lipoyl]-L-lysyl-[glycine-cleavage complex H protein] + glycine + H(+) = N(6)-[(R)-S(8)-aminomethyldihydrolipoyl]-L-lysyl-[glycine-cleavage complex H protein] + CO2. Functionally, the glycine cleavage system catalyzes the degradation of glycine. The P protein binds the alpha-amino group of glycine through its pyridoxal phosphate cofactor; CO(2) is released and the remaining methylamine moiety is then transferred to the lipoamide cofactor of the H protein. The sequence is that of Probable glycine dehydrogenase (decarboxylating) subunit 1 from Methylococcus capsulatus (strain ATCC 33009 / NCIMB 11132 / Bath).